A 371-amino-acid chain; its full sequence is Peptide chain release factor 2 (371 aa).

Position 253 is an N5-methylglutamine (Gln253).

It belongs to the prokaryotic/mitochondrial release factor family. Methylated by PrmC. Methylation increases the termination efficiency of RF2.

It localises to the cytoplasm. Functionally, peptide chain release factor 2 directs the termination of translation in response to the peptide chain termination codons UGA and UAA. This Mycobacterium sp. (strain KMS) protein is Peptide chain release factor 2.